We begin with the raw amino-acid sequence, 518 residues long: Anthranilate synthase component 1 (518 aa).

L-tryptophan-binding positions include S38 and 283 to 285 (PYM). Position 324 to 325 (324 to 325 (GT)) interacts with chorismate. E357 contacts Mg(2+). Chorismate-binding positions include Y445, R465, 479–481 (GAG), and G481. E494 is a Mg(2+) binding site.

The protein belongs to the anthranilate synthase component I family. As to quaternary structure, heterotetramer consisting of two non-identical subunits: a beta subunit (TrpG) and a large alpha subunit (TrpE). The cofactor is Mg(2+).

It carries out the reaction chorismate + L-glutamine = anthranilate + pyruvate + L-glutamate + H(+). Its pathway is amino-acid biosynthesis; L-tryptophan biosynthesis; L-tryptophan from chorismate: step 1/5. Feedback inhibited by tryptophan. In terms of biological role, part of a heterotetrameric complex that catalyzes the two-step biosynthesis of anthranilate, an intermediate in the biosynthesis of L-tryptophan. In the first step, the glutamine-binding beta subunit (TrpG) of anthranilate synthase (AS) provides the glutamine amidotransferase activity which generates ammonia as a substrate that, along with chorismate, is used in the second step, catalyzed by the large alpha subunit of AS (TrpE) to produce anthranilate. In the absence of TrpG, TrpE can synthesize anthranilate directly from chorismate and high concentrations of ammonia. The protein is Anthranilate synthase component 1 (trpE) of Corynebacterium glutamicum (strain ATCC 13032 / DSM 20300 / JCM 1318 / BCRC 11384 / CCUG 27702 / LMG 3730 / NBRC 12168 / NCIMB 10025 / NRRL B-2784 / 534).